Here is a 1135-residue protein sequence, read N- to C-terminus: Envelopment polyprotein (1135 aa).

A signal peptide spans 1–18 (MIMWGLLLTMILIDFGAS). Over 19–495 (LRNVYDMKIE…ALLTTFCFGW (477 aa)) the chain is Lumenal. 11 disulfide bridges follow: Cys-29/Cys-151, Cys-63/Cys-157, Cys-109/Cys-128, Cys-133/Cys-138, Cys-175/Cys-185, Cys-210/Cys-247, Cys-234/Cys-351, Cys-376/Cys-435, Cys-380/Cys-389, Cys-405/Cys-424, and Cys-452/Cys-475. An N-linked (GlcNAc...) asparagine; by host glycan is attached at Asn-134. N-linked (GlcNAc...) asparagine; by host glycosylation is found at Asn-235 and Asn-347. Asn-399 carries N-linked (GlcNAc...) asparagine; by host glycosylation. Residues 496–516 (ILILSITLAVLVVLKFFAAIL) traverse the membrane as a helical segment. The binding to the ribonucleoprotein stretch occupies residues 516–533 (LHNSSQENRFKIILRKIK). Over 517-627 (HNSSQENRFK…LNLFRYKSRC (111 aa)) the chain is Cytoplasmic. 2 CCHC-type zinc fingers span residues 545 to 565 (CEVCKYECETGKELKAHNLSC) and 570 to 591 (CPYCFTHCEPTESAFQAHYKVC). Binding to the ribonucleoprotein stretches follow at residues 588–605 (YKVCQATHRFRDDLKKTI), 592–603 (QATHRFRDDLKK), and 611–625 (SPGCYRTLNLFRYKS). The ITAM domain maps to 611–634 (SPGCYRTLNLFRYKSRCYIFTVWV). A phosphotyrosine mark is found at Tyr-615 and Tyr-628. The YxxL motif lies at 615 to 618 (YRTL). The chain crosses the membrane as a helical span at residues 628–648 (YIFTVWVTLLIIESIMWAASA). Residues 649-1105 (SETVLEPSWN…EWITGIFNGN (457 aa)) are Lumenal-facing. 8 cysteine pairs are disulfide-bonded: Cys-735-Cys-770, Cys-739-Cys-777, Cys-751-Cys-885, Cys-765-Cys-896, Cys-780-Cys-904, Cys-806-Cys-815, Cys-823-Cys-832, and Cys-863-Cys-867. Residues 757–777 (FEYENNWGCNPADCPGIGTGC) form a fusion loop region. Asn-928 carries an N-linked (GlcNAc...) asparagine; by host glycan. Intrachain disulfides connect Cys-970–Cys-1000, Cys-993–Cys-1045, Cys-1010–Cys-1015, Cys-1046–Cys-1051, and Cys-1085–Cys-1089. A helical membrane pass occupies residues 1106–1126 (WIVIVVLVFFFILSLILLSLL). A binding to the ribonucleoprotein region spans residues 1122-1135 (LLSLLCPIRKHKRS). Topologically, residues 1127–1135 (CPIRKHKRS) are cytoplasmic.

This sequence belongs to the hantavirus envelope glycoprotein family. Homodimer. Homotetramer; forms heterotetrameric Gn-Gc spikes in the pre-fusion conformation. Interacts (via C-terminus) with the nucleoprotein. Interacts with host TUFM; this interaction contributes to the virus-induced degradation of mitochondria by autophagy, which leads to degradation of host MAVS and inhibition of type I interferon (IFN) responses. Interacts with host MAP1LC3B; this interaction contributes to the virus-induced degradation of mitochondria by autophagy, which leads to degradation of host MAVS and inhibition of type I interferon (IFN) responses. In terms of assembly, homodimer. Homotetramer; forms heterotetrameric Gn-Gc spikes in the pre-fusion conformation. Homotrimer; forms homotrimer in the post-fusion conformation at acidic pH. Interacts (via C-terminus) with the nucleoprotein. Envelope polyprotein precursor is quickly cleaved in vivo just after synthesis, presumably by host signal peptidase.

The protein localises to the virion membrane. It is found in the host cell surface. It localises to the host Golgi apparatus membrane. Its subcellular location is the host endoplasmic reticulum membrane. The protein resides in the host mitochondrion. Forms homotetramers with glycoprotein C at the surface of the virion. Attaches the virion to host cell receptors including integrin ITGAV/ITGB3. This attachment induces virion internalization predominantly through clathrin-dependent endocytosis. Mediates the assembly and budding of infectious virus particles through its interaction with the nucleocapsid protein and the viral genome. May dysregulate normal immune and endothelial cell responses through an ITAM motif. Translocates to mitochondria, binds to host TUFM and recruits MAP1LC3B. These interactions induce mitochondrial autophagy and therefore destruction of host MAVS leading to inhibition of type I interferon (IFN) responses. Concomitant breakdown of glycoprotein N is apparently prevented by the nucleoprotein that may inhibit Gn-stimulated autophagosome-lysosome fusion. Interacts with the viral genomic RNA. In terms of biological role, forms homotetramers with glycoprotein N at the surface of the virion. Attaches the virion to host cell receptors including integrin ITGAV/ITGB3. This attachment induces virion internalization predominantly through clathrin-dependent endocytosis. Class II fusion protein that promotes fusion of viral membrane with host endosomal membrane after endocytosis of the virion. The polypeptide is Envelopment polyprotein (GP) (Dobrava-Belgrade orthohantavirus (DOBV)).